The sequence spans 201 residues: Ribosomal RNA large subunit methyltransferase E (201 aa).

S-adenosyl-L-methionine is bound by residues Gly49, Trp51, Asp69, Asp87, and Asp111. Residue Lys151 is the Proton acceptor of the active site.

It belongs to the class I-like SAM-binding methyltransferase superfamily. RNA methyltransferase RlmE family.

Its subcellular location is the cytoplasm. It carries out the reaction uridine(2552) in 23S rRNA + S-adenosyl-L-methionine = 2'-O-methyluridine(2552) in 23S rRNA + S-adenosyl-L-homocysteine + H(+). Specifically methylates the uridine in position 2552 of 23S rRNA at the 2'-O position of the ribose in the fully assembled 50S ribosomal subunit. This chain is Ribosomal RNA large subunit methyltransferase E, found in Nitratidesulfovibrio vulgaris (strain DSM 19637 / Miyazaki F) (Desulfovibrio vulgaris).